The primary structure comprises 270 residues: Phospholysine phosphohistidine inorganic pyrophosphate phosphatase (270 aa).

2 residues coordinate Mg(2+): aspartate 17 and serine 19. Residues 17 to 19, 54 to 55, and lysine 189 contribute to the substrate site; these read DIS and TN. Aspartate 214 is a binding site for Mg(2+).

This sequence belongs to the HAD-like hydrolase superfamily. Homodimer. It depends on Mg(2+) as a cofactor. In terms of tissue distribution, detected in liver (at protein level).

It is found in the cytoplasm. Its subcellular location is the nucleus. The catalysed reaction is diphosphate + H2O = 2 phosphate + H(+). Phosphatase that hydrolyzes imidodiphosphate, 3-phosphohistidine and 6-phospholysine. Has broad substrate specificity and can also hydrolyze inorganic diphosphate, but with lower efficiency. This Bos taurus (Bovine) protein is Phospholysine phosphohistidine inorganic pyrophosphate phosphatase (LHPP).